Reading from the N-terminus, the 240-residue chain is ATP-dependent Clp protease proteolytic subunit 2 (240 aa).

The Nucleophile role is filled by Ser132. His157 is an active-site residue.

The protein belongs to the peptidase S14 family. Fourteen ClpP subunits assemble into 2 heptameric rings which stack back to back to give a disk-like structure with a central cavity, resembling the structure of eukaryotic proteasomes.

It localises to the cytoplasm. It catalyses the reaction Hydrolysis of proteins to small peptides in the presence of ATP and magnesium. alpha-casein is the usual test substrate. In the absence of ATP, only oligopeptides shorter than five residues are hydrolyzed (such as succinyl-Leu-Tyr-|-NHMec, and Leu-Tyr-Leu-|-Tyr-Trp, in which cleavage of the -Tyr-|-Leu- and -Tyr-|-Trp bonds also occurs).. Its function is as follows. Cleaves peptides in various proteins in a process that requires ATP hydrolysis. Has a chymotrypsin-like activity. Plays a major role in the degradation of misfolded proteins. The protein is ATP-dependent Clp protease proteolytic subunit 2 of Synechococcus elongatus (strain ATCC 33912 / PCC 7942 / FACHB-805) (Anacystis nidulans R2).